Consider the following 630-residue polypeptide: Low affinity heme transporter str3 (630 aa).

Basic and acidic residues predominate over residues 1–26 (MEAKETHSISDHEVELQDAKPEEKSE). The segment at 1-51 (MEAKETHSISDHEVELQDAKPEEKSENGNFVFEKAFSSDEEKGSGYNTNET) is disordered. The Cytoplasmic segment spans residues 1 to 79 (MEAKETHSIS…VRDSIYQNKR (79 aa)). A phosphoserine mark is found at S10 and S38. A helical membrane pass occupies residues 80–100 (GMYLAYAFGIAILACSWASAI). The Extracellular segment spans residues 101-120 (QSSTTYSYQVYATASFNRTS). A helical transmembrane segment spans residues 121–141 (MISTLEIATAIISSVCKPILG). At 142 to 154 (KFSDITSRPMTYT) the chain is on the cytoplasmic side. A helical membrane pass occupies residues 155–175 (LVLLFYVIGFIVVASSSTISA). Residue Y176 is a topological domain, extracellular. Residues 177 to 197 (VIGSVFISIGSSGLDYLNTLV) traverse the membrane as a helical segment. Residues 198–208 (VGDLTSLKWRG) lie on the Cytoplasmic side of the membrane. The chain crosses the membrane as a helical span at residues 209–229 (FMTALLSTPYIATVWFTGFIV). Residues 230–241 (QGIIDSNWRWGY) are Extracellular-facing. A helical transmembrane segment spans residues 242 to 262 (GMFAIIMPAVMTPAVIILMYL). The Cytoplasmic portion of the chain corresponds to 263–302 (ERQANKDENIKKIINYQTEEKNKNKQSKWQKLWKAVLEVD). The chain crosses the membrane as a helical span at residues 303-323 (LFGLILLGVGWSILLLPFSLT). At 324-335 (SYAKNGWKNPSM) the chain is on the extracellular side. A helical membrane pass occupies residues 336-356 (IAMMVVGGVILIAYSGYEMFI). Over 357–370 (APYPSCPRRVMNRT) the chain is Cytoplasmic. A helical transmembrane segment spans residues 371–391 (FITAVIIDFFYYLAGYLQSMY). Residues 392 to 406 (FTTYTWILYDWSYRD) are Extracellular-facing. A helical transmembrane segment spans residues 407–427 (WTYFNNTMTIALCVFGVFAGA). The Cytoplasmic segment spans residues 428 to 439 (MHRVFHRYKYLQ). A helical transmembrane segment spans residues 440 to 460 (IIGLVIKIVGYGILIRPNFAA). Topologically, residues 461–465 (TGKVD) are extracellular. The chain crosses the membrane as a helical span at residues 466–486 (LAWSLILIGMGGSFSVVGSQV). The Cytoplasmic portion of the chain corresponds to 487–502 (SCQASVPHQDLAIASS). A helical transmembrane segment spans residues 503–523 (LLPLYTNIGGAIGAAIASPIF). Residues 522–576 (IFSNKVPKYLREYLPSSINDTQVYNFYSDSSLIREYPVGTEIRDGAIKAYSRSMF) are heme binding. The Extracellular segment spans residues 524-574 (SNKVPKYLREYLPSSINDTQVYNFYSDSSLIREYPVGTEIRDGAIKAYSRS). A helical membrane pass occupies residues 575 to 595 (MFFLLVPAVSLSFIPLAAAFW). The Cytoplasmic portion of the chain corresponds to 596 to 630 (QSNFYLGNQQNAVEGDQDHKKKGDKETTQEEKIII). A disordered region spans residues 610–630 (GDQDHKKKGDKETTQEEKIII). A compositionally biased stretch (basic and acidic residues) spans 611 to 630 (DQDHKKKGDKETTQEEKIII).

The protein belongs to the major facilitator superfamily.

Its subcellular location is the cell membrane. Its function is as follows. Low affinity heme transporter involved in the assimilation of exogenous heme during conditions of low cellular iron. This Schizosaccharomyces pombe (strain 972 / ATCC 24843) (Fission yeast) protein is Low affinity heme transporter str3.